The chain runs to 569 residues: AA9 family lytic polysaccharide monooxygenase A (569 aa).

Positions 1 to 16 (MRIFSLALGFLPLVAG) are cleaved as a signal peptide. Cu(2+) contacts are provided by histidine 17 and histidine 99. A disulfide bond links cysteine 59 and cysteine 189. N-linked (GlcNAc...) asparagine glycosylation occurs at asparagine 112. O2 is bound by residues histidine 174 and glutamine 184. Residue tyrosine 186 participates in Cu(2+) binding. Asparagine 244 and asparagine 381 each carry an N-linked (GlcNAc...) asparagine glycan. Residues 399–424 (AADATATATATTEDAEATTAAEAAAT) show a composition bias toward low complexity. A disordered region spans residues 399–439 (AADATATATATTEDAEATTAAEAAATSGAGRPGRGHGHGRG). A glycan (N-linked (GlcNAc...) asparagine) is linked at asparagine 472.

This sequence belongs to the polysaccharide monooxygenase AA9 family. Requires Cu(2+) as cofactor.

The protein resides in the secreted. It carries out the reaction [(1-&gt;4)-beta-D-glucosyl]n+m + reduced acceptor + O2 = 4-dehydro-beta-D-glucosyl-[(1-&gt;4)-beta-D-glucosyl]n-1 + [(1-&gt;4)-beta-D-glucosyl]m + acceptor + H2O.. Functionally, lytic polysaccharide monooxygenase (LPMO) that depolymerizes crystalline and amorphous polysaccharides via the oxidation of scissile alpha- or beta-(1-4)-glycosidic bonds, yielding C4 oxidation products. Catalysis by LPMOs requires the reduction of the active-site copper from Cu(II) to Cu(I) by a reducing agent and H(2)O(2) or O(2) as a cosubstrate. The sequence is that of AA9 family lytic polysaccharide monooxygenase A from Emericella nidulans (strain FGSC A4 / ATCC 38163 / CBS 112.46 / NRRL 194 / M139) (Aspergillus nidulans).